Reading from the N-terminus, the 314-residue chain is MAFLEDGNHTAVTEFILLGLTDDPVLRVILFTIILCIYLVTVSGNLSTILLIRVSSQLHHPMYFFLSHVGSVDIGYSSSVTPNMLVNFLVEKHTIAYLGCGIQLSSAAFFGTAECFLLATMAYDRFVAICNPLLYSTKMSTQTCIQLVVGSYTGGILNASFAIISFFSFLFCGPNRINHFYCDFAPLVELSCSDINVSVVITTIFSASVTIITVFVIAISYTYILITILKMRSTEGRHKAFSTCTSYLTAVTLFYGTVTFIYVVPKSNYSTDQNKVASVFYIVVIPMLNPLIYSLRNNDIKGALKRQLGKKTFS.

Residues 1–28 are Extracellular-facing; the sequence is MAFLEDGNHTAVTEFILLGLTDDPVLRV. The N-linked (GlcNAc...) asparagine glycan is linked to asparagine 8. A helical membrane pass occupies residues 29-49; the sequence is ILFTIILCIYLVTVSGNLSTI. At 50–57 the chain is on the cytoplasmic side; the sequence is LLIRVSSQ. A helical transmembrane segment spans residues 58–78; that stretch reads LHHPMYFFLSHVGSVDIGYSS. At 79 to 102 the chain is on the extracellular side; that stretch reads SVTPNMLVNFLVEKHTIAYLGCGI. Cysteine 100 and cysteine 192 are disulfide-bonded. A helical membrane pass occupies residues 103–123; the sequence is QLSSAAFFGTAECFLLATMAY. The Cytoplasmic segment spans residues 124-136; the sequence is DRFVAICNPLLYS. The helical transmembrane segment at 137-157 threads the bilayer; the sequence is TKMSTQTCIQLVVGSYTGGIL. Topologically, residues 158–199 are extracellular; it reads NASFAIISFFSFLFCGPNRINHFYCDFAPLVELSCSDINVSV. The helical transmembrane segment at 200–220 threads the bilayer; the sequence is VITTIFSASVTIITVFVIAIS. Residues 221-240 lie on the Cytoplasmic side of the membrane; it reads YTYILITILKMRSTEGRHKA. The chain crosses the membrane as a helical span at residues 241 to 261; the sequence is FSTCTSYLTAVTLFYGTVTFI. The Extracellular portion of the chain corresponds to 262 to 274; sequence YVVPKSNYSTDQN. Asparagine 268 carries N-linked (GlcNAc...) asparagine glycosylation. Residues 275–295 traverse the membrane as a helical segment; sequence KVASVFYIVVIPMLNPLIYSL. Residues 296 to 314 lie on the Cytoplasmic side of the membrane; the sequence is RNNDIKGALKRQLGKKTFS.

This sequence belongs to the G-protein coupled receptor 1 family.

Its subcellular location is the cell membrane. Its function is as follows. Potential odorant receptor. The protein is Olfactory receptor 5P67 of Mus musculus (Mouse).